Here is a 444-residue protein sequence, read N- to C-terminus: MMEFFPEIPKIQFEGKESTNPLAFKFYDPNEVIDGKPLKDHLKFSVAFWHTFVNEGRDPFGDPTAERPWNRFSDPMDKAFARVDALFEFCEKLNIEYFCFHDRDIAPEGKTLRETNKILDKVVERIKERMKDSNVKLLWGTANLFSHPRYMHGAATTCSADVFAYAAAQVKKALEITKELGGEGYVFWGGREGYETLLNTDLGLELENLARFLRMAVEYAKKIGFTGQFLIEPKPKEPTKHQYDFDVATAYAFLKNHGLDEYFKFNIEANHATLAGHTFQHELRMARILGKLGSIDANQGDLLLGWDTDQFPTNIYDTTLAMYEVIKAGGFTKGGLNFDAKVRRASYKVEDLFIGHIVGMDTFALGFKIAYKLVKDEVLDRFIEEKYRSFKEGIGKEIVEGKADFEKLEEYIIDKEDIELPSGKQEYLESLLNSYIVKTIAELR.

Active-site residues include H101 and D104. Mg(2+)-binding residues include E232, E268, H271, D296, D307, D309, and D339.

This sequence belongs to the xylose isomerase family. In terms of assembly, homotetramer. Mg(2+) is required as a cofactor.

It localises to the cytoplasm. It carries out the reaction alpha-D-xylose = alpha-D-xylulofuranose. In Thermotoga petrophila (strain ATCC BAA-488 / DSM 13995 / JCM 10881 / RKU-1), this protein is Xylose isomerase.